Reading from the N-terminus, the 842-residue chain is Protein P (842 aa).

Residues 1–177 (MPLSYQHFRR…FCGSPYSWEQ (177 aa)) form a terminal protein domain (TP) region. A spacer region spans residues 178-345 (ELHHGAFLDG…YCLTHLVNLL (168 aa)). The disordered stretch occupies residues 186–273 (DGPSRMGEES…AKNIASRSAS (88 aa)). Polar residues predominate over residues 223–239 (GPQSQQRPLDGSQQGRS). Residues 346-689 (EDWGPCTEHG…YLNLYPVARQ (344 aa)) form a polymerase/reverse transcriptase domain (RT) region. The Reverse transcriptase domain maps to 356–599 (KHHIRIPRTP…YSLNFMGYVI (244 aa)). Mg(2+) is bound by residues Asp428, Asp550, and Asp551.

Belongs to the hepadnaviridae P protein family.

It catalyses the reaction DNA(n) + a 2'-deoxyribonucleoside 5'-triphosphate = DNA(n+1) + diphosphate. The enzyme catalyses Endonucleolytic cleavage to 5'-phosphomonoester.. Activated by host HSP70 and HSP40 in vitro to be able to bind the epsilon loop of the pgRNA. Because deletion of the RNase H region renders the protein partly chaperone-independent, the chaperones may be needed indirectly to relieve occlusion of the RNA-binding site by this domain. Inhibited by several reverse-transcriptase inhibitors: Lamivudine, Adefovir and Entecavir. Functionally, multifunctional enzyme that converts the viral RNA genome into dsDNA in viral cytoplasmic capsids. This enzyme displays a DNA polymerase activity that can copy either DNA or RNA templates, and a ribonuclease H (RNase H) activity that cleaves the RNA strand of RNA-DNA heteroduplexes in a partially processive 3'- to 5'-endonucleasic mode. Neo-synthesized pregenomic RNA (pgRNA) are encapsidated together with the P protein, and reverse-transcribed inside the nucleocapsid. Initiation of reverse-transcription occurs first by binding the epsilon loop on the pgRNA genome, and is initiated by protein priming, thereby the 5'-end of (-)DNA is covalently linked to P protein. Partial (+)DNA is synthesized from the (-)DNA template and generates the relaxed circular DNA (RC-DNA) genome. After budding and infection, the RC-DNA migrates in the nucleus, and is converted into a plasmid-like covalently closed circular DNA (cccDNA). The activity of P protein does not seem to be necessary for cccDNA generation, and is presumably released from (+)DNA by host nuclear DNA repair machinery. The sequence is that of Protein P from Homo sapiens (Human).